Reading from the N-terminus, the 412-residue chain is Arginine biosynthesis bifunctional protein ArgJ (412 aa).

Substrate is bound by residues Thr162, Lys188, Thr199, Glu285, Asn407, and Thr412. The active-site Nucleophile is Thr199.

It belongs to the ArgJ family. In terms of assembly, heterotetramer of two alpha and two beta chains.

The protein resides in the cytoplasm. The catalysed reaction is N(2)-acetyl-L-ornithine + L-glutamate = N-acetyl-L-glutamate + L-ornithine. It catalyses the reaction L-glutamate + acetyl-CoA = N-acetyl-L-glutamate + CoA + H(+). The protein operates within amino-acid biosynthesis; L-arginine biosynthesis; L-ornithine and N-acetyl-L-glutamate from L-glutamate and N(2)-acetyl-L-ornithine (cyclic): step 1/1. Its pathway is amino-acid biosynthesis; L-arginine biosynthesis; N(2)-acetyl-L-ornithine from L-glutamate: step 1/4. In terms of biological role, catalyzes two activities which are involved in the cyclic version of arginine biosynthesis: the synthesis of N-acetylglutamate from glutamate and acetyl-CoA as the acetyl donor, and of ornithine by transacetylation between N(2)-acetylornithine and glutamate. The protein is Arginine biosynthesis bifunctional protein ArgJ of Staphylococcus saprophyticus subsp. saprophyticus (strain ATCC 15305 / DSM 20229 / NCIMB 8711 / NCTC 7292 / S-41).